Reading from the N-terminus, the 146-residue chain is Single-stranded DNA-binding protein, mitochondrial (146 aa).

The N-terminal 22 residues, 1–22, are a transit peptide targeting the mitochondrion; that stretch reads MQHTRRMLNPLLTGLRNLPARG. Residues 38-142 enclose the SSB domain; the sequence is VNTVTILGRV…IIADDVLFFR (105 aa).

In terms of assembly, homotetramer. Uniformly distributed in the early embryo. High levels detected in the anterior and posterior midgut primordia of stage 12 embryos. In larvae, high levels were detected in proliferating tissues including the CNS and digestive tract. In adults, highly expressed in the CNS, digestive tract and ovary.

The protein localises to the mitochondrion. In terms of biological role, binds preferentially and cooperatively to pyrimidine rich single-stranded DNA (ss-DNA). Required to maintain the copy number of mitochondrial DNA (mtDNA) and plays crucial roles during mtDNA replication that stimulate activity of the gamma complex polymerase PolG1/tam at the replication fork. Promotes PolG1 activity largely by organizing the template DNA and eliminating secondary structures to favor ss-DNA conformations that facilitate PolG1 activity. The chain is Single-stranded DNA-binding protein, mitochondrial (mtSSB) from Drosophila melanogaster (Fruit fly).